Consider the following 389-residue polypeptide: Geodin cluster transcriptional coactivator gedD (389 aa).

The HTH iclR-type domain maps to 13–83 (LAWHVQLLAC…QPGQIMHTPL (71 aa)). The segment at residues 43–62 (VRDLAQLCGVSETTLSRVVR) is a DNA-binding region (H-T-H motif).

It localises to the nucleus. In terms of biological role, transcriptional coactivator; part of the gene cluster that mediates the biosynthesis of geodin, an intermediate in the biosynthesis of other natural products. With gedR, coregulates the production of geodin. This Aspergillus terreus (strain NIH 2624 / FGSC A1156) protein is Geodin cluster transcriptional coactivator gedD (gedD).